Here is a 364-residue protein sequence, read N- to C-terminus: MDILFYKVFRNLYIKNIIFKILRLYKNYSKKYNVFKNVEQYKLFKDKEYLVKMEWDMNIEIPINLIPDNTIKYLKFGKYFNQPIKSLPIGVELIDLKYSLNFNQNQFQIPITLKTLILNRDFNQNFTKLSNNNNDDDNNNLSLNKVENISFGRDYDCLIDETIFSKSITSIKLSDSFCQELDDRTLPKTLTFLEFGWTFNGYLKIGDLDGLSKLRVLKFGVSFNTEIQCNVLPNSIEKITFGSSFNQVILPNSLPRNLRILKFGSSFNQPIFPPPSSLSSESLPNLLKLKFDSSFNQPILPSSLSNSITRLEFRSTHFNQQLSISSLPKNLKYLGIFINNYSTIIEDNDNNNNSEFLKIINILN.

FNIP repeat units lie at residues 57–98 (MNIE…DLKY), 155–198 (YDCL…FGWT), 214–244 (LRVL…FGSS), 245–271 (FNQV…NQPI), and 295–340 (FNQP…FINN).

The chain is FNIP repeat-containing protein DDB_G0277323 from Dictyostelium discoideum (Social amoeba).